The following is a 126-amino-acid chain: Fatty acid-binding protein, liver (126 aa).

Ala2 bears the N-acetylalanine mark. Residues Arg56, Gln57, Lys77, His99, and Gln101 each coordinate cholate.

Belongs to the calycin superfamily. Fatty-acid binding protein (FABP) family.

The protein resides in the cytoplasm. Functionally, binds free fatty acids and their coenzyme A derivatives, bilirubin, and some other small molecules in the cytoplasm. May be involved in intracellular lipid transport. Binds 2 molecules of cholate per subunit. The chain is Fatty acid-binding protein, liver (FABP1) from Gallus gallus (Chicken).